The primary structure comprises 913 residues: DNA polymerase I (913 aa).

The region spanning 1–305 (MSQAPLVLVD…AGENGEAETP (305 aa)) is the 5'-3' exonuclease domain. In terms of domain architecture, 3'-5' exonuclease spans 306-501 (IQAEVDYDVV…LHQALWQKLE (196 aa)). The interval 505 to 913 (SLARVLTDIE…GVGSNWDEAH (409 aa)) is polymerase.

The protein belongs to the DNA polymerase type-A family. In terms of assembly, single-chain monomer with multiple functions.

The catalysed reaction is DNA(n) + a 2'-deoxyribonucleoside 5'-triphosphate = DNA(n+1) + diphosphate. Functionally, in addition to polymerase activity, this DNA polymerase exhibits 3'-5' and 5'-3' exonuclease activity. This chain is DNA polymerase I (polA), found in Pseudomonas aeruginosa (strain ATCC 15692 / DSM 22644 / CIP 104116 / JCM 14847 / LMG 12228 / 1C / PRS 101 / PAO1).